The sequence spans 287 residues: Thioredoxin-related transmembrane protein 2 (287 aa).

An N-terminal signal peptide occupies residues 1–35 (MAVLAPLLAFLYAVPGLLRWVSQPYYLLSALLSVS). Residues 36-112 (FLLVRKVPPV…ILFFRLDLRM (77 aa)) are Extracellular-facing. Residues 113-133 (GLLYITLCIVFLMTCKPPLYL) form a helical membrane-spanning segment. Topologically, residues 134–287 (GPEHIKYFSD…NEYNDSKKDQ (154 aa)) are cytoplasmic. In terms of domain architecture, Thioredoxin spans 135–269 (PEHIKYFSDK…LYQKAKKIRK (135 aa)). Positions 284–287 (KKDQ) match the Di-lysine motif motif.

Monomer. Homodimer; disulfide-linked. Occurs in both reduced and oxidized monomeric form. Oxidative conditions increase homodimerization.

Its subcellular location is the endoplasmic reticulum membrane. The protein localises to the mitochondrion membrane. Endoplasmic reticulum and mitochondria-associated protein that probably functions as a regulator of cellular redox state and thereby regulates protein post-translational modification, protein folding and mitochondrial activity. The sequence is that of Thioredoxin-related transmembrane protein 2 (tmx2) from Xenopus tropicalis (Western clawed frog).